Consider the following 242-residue polypeptide: Anamorsin homolog (242 aa).

Residues 1–140 (MMNFADTLVI…NVTAENPDFL (140 aa)) are N-terminal SAM-like domain. A linker region spans residues 141–162 (SNEDDDEGNSSDGEAYQNAEDN). [4Fe-4S] cluster contacts are provided by Cys205, Cys208, Cys216, and Cys219. 2 short sequence motifs (cx2C motif) span residues 205–208 (CGNC) and 216–219 (CASC). Residues 205 to 219 (CGNCYLGDAFRCASC) form a fe-S binding site B region.

The protein belongs to the anamorsin family. Monomer. The cofactor is [4Fe-4S] cluster.

It is found in the cytoplasm. It localises to the mitochondrion intermembrane space. Functionally, component of the cytosolic iron-sulfur (Fe-S) protein assembly (CIA) machinery. Required for the maturation of extramitochondrial Fe-S proteins. Part of an electron transfer chain functioning in an early step of cytosolic Fe-S biogenesis, facilitating the de novo assembly of a [4Fe-4S] cluster on the cytosolic Fe-S scaffold complex. Electrons are transferred from NADPH via a FAD- and FMN-containing diflavin oxidoreductase. Together with the diflavin oxidoreductase, also required for the assembly of the diferric tyrosyl radical cofactor of ribonucleotide reductase (RNR), probably by providing electrons for reduction during radical cofactor maturation in the catalytic small subunit. The polypeptide is Anamorsin homolog (Plasmodium knowlesi (strain H)).